The following is a 124-amino-acid chain: Small ribosomal subunit protein bS6m (124 aa).

This sequence belongs to the bacterial ribosomal protein bS6 family. In terms of assembly, component of the mitochondrial ribosome small subunit (28S) which comprises a 12S rRNA and about 30 distinct proteins.

It is found in the mitochondrion. The protein is Small ribosomal subunit protein bS6m (MRPS6) of Bos taurus (Bovine).